We begin with the raw amino-acid sequence, 118 residues long: Large ribosomal subunit protein uL18 (118 aa).

Positions 1–22 are disordered; sequence MISKPDKNKLRQKRHRRVRGKL. Basic residues predominate over residues 10–20; sequence LRQKRHRRVRG.

This sequence belongs to the universal ribosomal protein uL18 family. In terms of assembly, part of the 50S ribosomal subunit; part of the 5S rRNA/L5/L18/L25 subcomplex. Contacts the 5S and 23S rRNAs.

Its function is as follows. This is one of the proteins that bind and probably mediate the attachment of the 5S RNA into the large ribosomal subunit, where it forms part of the central protuberance. The sequence is that of Large ribosomal subunit protein uL18 from Streptococcus thermophilus (strain ATCC BAA-491 / LMD-9).